A 247-amino-acid chain; its full sequence is Germin-like protein 9-1 (247 aa).

The first 25 residues, Met-1–Ala-25, serve as a signal peptide directing secretion. Positions Lys-53–Asp-201 constitute a Cupin type-1 domain. Mn(2+) contacts are provided by His-100, His-102, and Glu-107. Asn-126 carries an N-linked (GlcNAc...) asparagine glycan. Residue His-148 participates in Mn(2+) binding. Asn-153 is a glycosylation site (N-linked (GlcNAc...) asparagine).

Belongs to the germin family. Oligomer (believed to be a pentamer but probably hexamer).

The protein resides in the secreted. Its subcellular location is the extracellular space. It is found in the apoplast. In terms of biological role, may play a role in plant defense. Probably has no oxalate oxidase activity even if the active site is conserved. The protein is Germin-like protein 9-1 of Oryza sativa subsp. japonica (Rice).